Reading from the N-terminus, the 338-residue chain is Tetraacyldisaccharide 4'-kinase (338 aa).

Residue 66-73 coordinates ATP; sequence IAGGAGKT.

It belongs to the LpxK family.

The enzyme catalyses a lipid A disaccharide + ATP = a lipid IVA + ADP + H(+). It functions in the pathway glycolipid biosynthesis; lipid IV(A) biosynthesis; lipid IV(A) from (3R)-3-hydroxytetradecanoyl-[acyl-carrier-protein] and UDP-N-acetyl-alpha-D-glucosamine: step 6/6. Its function is as follows. Transfers the gamma-phosphate of ATP to the 4'-position of a tetraacyldisaccharide 1-phosphate intermediate (termed DS-1-P) to form tetraacyldisaccharide 1,4'-bis-phosphate (lipid IVA). This chain is Tetraacyldisaccharide 4'-kinase, found in Delftia acidovorans (strain DSM 14801 / SPH-1).